We begin with the raw amino-acid sequence, 335 residues long: Mycobacterial beta-ketoacyl-[acyl-carrier-protein] synthase III (335 aa).

Active-site residues include Cys122 and His258. An ACP-binding region spans residues 259 to 263; that stretch reads QANSR. The active site involves Asn289.

Belongs to the thiolase-like superfamily. FabH family. Homodimer.

It is found in the cytoplasm. It catalyses the reaction malonyl-[ACP] + dodecanoyl-CoA + H(+) = 3-oxotetradecanoyl-[ACP] + CO2 + CoA. The protein operates within lipid metabolism; fatty acid biosynthesis. It functions in the pathway lipid metabolism; mycolic acid biosynthesis. Functionally, catalyzes the condensation reaction of fatty acid synthesis by the addition to an acyl acceptor of two carbons from malonyl-ACP. Catalyzes the first condensation reaction which initiates fatty acid synthesis and may therefore play a role in governing the total rate of fatty acid production. Possesses both acetoacetyl-ACP synthase and acetyl transacylase activities. Its substrate specificity determines the biosynthesis of branched-chain and/or straight-chain of fatty acids. The protein is Mycobacterial beta-ketoacyl-[acyl-carrier-protein] synthase III of Mycolicibacterium paratuberculosis (strain ATCC BAA-968 / K-10) (Mycobacterium paratuberculosis).